We begin with the raw amino-acid sequence, 433 residues long: MQRMIQQFAAEYTSKNSSTQDPSQPNSTKNQSLPKASPVTTSPTAATTQNPVLSKLLMADQDSPLDLTVRKSQSEPSEQDGVLDLSTKKSPCAGSTSLSHSPGCSSTQGNGRPGRPSQYRPDGLRSGDGVPPRSLQDGTREGFGHSTSLKVPLARSLQISEELLSRNQLSTAASLGPSGLQNHGQHLILSREASWAKPHYEFNLSRMKFRGNGALSNISDLPFLAENSAFPKMALQAKQDGKKDVSHSSPVDLKIPQVRGMDLSWESRTGDQYSYSSLVMGSQTESALSKKLRAILPKQSRKSMLDAGPDSWGSDAEQSTSGQPYPTSDQEGDPGSKQPRKKRGRYRQYNSEILEEAISVVMSGKMSVSKAQSIYGIPHSTLEYKVKERLGTLKNPPKKKMKLMRSEGPDVSVKIELDPQGEAAQSANESKNE.

Residues 1 to 51 (MQRMIQQFAAEYTSKNSSTQDPSQPNSTKNQSLPKASPVTTSPTAATTQNP) are disordered. Positions 13-34 (TSKNSSTQDPSQPNSTKNQSLP) are enriched in polar residues. A compositionally biased stretch (low complexity) spans 36–48 (ASPVTTSPTAATT). Serine 42 carries the post-translational modification Phosphoserine. The Interaction with nuclear receptors motif lies at 53 to 57 (LSKLL). A Phosphoserine modification is found at serine 63. The segment at 64–147 (PLDLTVRKSQ…GTREGFGHST (84 aa)) is disordered. Residues 93–110 (AGSTSLSHSPGCSSTQGN) show a composition bias toward polar residues. A Phosphoserine modification is found at serine 249. A Glycyl lysine isopeptide (Lys-Gly) (interchain with G-Cter in SUMO2) cross-link involves residue lysine 254. The segment at 299–348 (QSRKSMLDAGPDSWGSDAEQSTSGQPYPTSDQEGDPGSKQPRKKRGRYRQ) is disordered. The segment covering 316-329 (AEQSTSGQPYPTSD) has biased composition (polar residues). A Nuclear localization signal motif is present at residues 339–345 (PRKKRGR). One can recognise an HTH psq-type domain in the interval 340–392 (RKKRGRYRQYNSEILEEAISVVMSGKMSVSKAQSIYGIPHSTLEYKVKERLGT). Residue arginine 345 forms a Glycyl lysine isopeptide (Lys-Gly) (interchain with G-Cter in SUMO2) linkage. Residues 368 to 388 (VSKAQSIYGIPHSTLEYKVKE) constitute a DNA-binding region (H-T-H motif). Glycine 391 participates in a covalent cross-link: Glycyl lysine isopeptide (Lys-Gly) (interchain with G-Cter in SUMO2). Positions 393-412 (LKNPPKKKMKLMRSEGPDVS) are disordered. Lysine 414 participates in a covalent cross-link: Glycyl lysine isopeptide (Lys-Gly) (interchain with G-Cter in SUMO2).

As to quaternary structure, interacts with ESR1 and ESR2 in the presence of estradiol. Interacts with CTBP1, HDAC3 and HDAC6. Component of a large corepressor complex that contains about 20 proteins, including CTBP1, CTBP2, HDAC1 and HDAC2. Ubiquitous.

Its subcellular location is the nucleus. Functionally, may act as transcription activator that binds DNA elements with the sequence 5'-CCCTATCGATCGATCTCTACCT-3'. Repressor of ligand-dependent transcription activation by target nuclear receptors. Repressor of ligand-dependent transcription activation by ESR1, ESR2, NR3C1, PGR, RARA, RARB, RARG, RXRA and VDR. In Homo sapiens (Human), this protein is Ligand-dependent corepressor.